A 494-amino-acid chain; its full sequence is Membrane-bound lytic murein transglycosylase F (494 aa).

A signal peptide spans 1–20 (MIKYLYVILLGLLLSGCQPA). The tract at residues 21-259 (EVVEIEASPK…HLNEKYFGHV (239 aa)) is non-LT domain. Residues 260–494 (KRFDYVDTRA…LKPKLGAGQP (235 aa)) are LT domain. Glu304 is a catalytic residue. Positions 473–485 (QSLASDSKTNNTL) are enriched in polar residues. Positions 473 to 494 (QSLASDSKTNNTLKPKLGAGQP) are disordered.

It in the N-terminal section; belongs to the bacterial solute-binding protein 3 family. This sequence in the C-terminal section; belongs to the transglycosylase Slt family.

It is found in the cell outer membrane. It catalyses the reaction Exolytic cleavage of the (1-&gt;4)-beta-glycosidic linkage between N-acetylmuramic acid (MurNAc) and N-acetylglucosamine (GlcNAc) residues in peptidoglycan, from either the reducing or the non-reducing ends of the peptidoglycan chains, with concomitant formation of a 1,6-anhydrobond in the MurNAc residue.. Murein-degrading enzyme that degrades murein glycan strands and insoluble, high-molecular weight murein sacculi, with the concomitant formation of a 1,6-anhydromuramoyl product. Lytic transglycosylases (LTs) play an integral role in the metabolism of the peptidoglycan (PG) sacculus. Their lytic action creates space within the PG sacculus to allow for its expansion as well as for the insertion of various structures such as secretion systems and flagella. This is Membrane-bound lytic murein transglycosylase F from Shewanella denitrificans (strain OS217 / ATCC BAA-1090 / DSM 15013).